We begin with the raw amino-acid sequence, 261 residues long: Small ribosomal subunit protein eS4B (261 aa).

A Phosphoserine modification is found at Ser32. An S4 RNA-binding domain is found at Leu42–Val105. Lys62 is covalently cross-linked (Glycyl lysine isopeptide (Lys-Gly) (interchain with G-Cter in ubiquitin)). Thr115 carries the phosphothreonine modification. Glycyl lysine isopeptide (Lys-Gly) (interchain with G-Cter in ubiquitin) cross-links involve residues Lys134, Lys161, Lys168, Lys174, Lys179, Lys211, and Lys233. Ser247 carries the post-translational modification Phosphoserine.

The protein belongs to the eukaryotic ribosomal protein eS4 family. In terms of assembly, component of the small ribosomal subunit (SSU). Mature yeast ribosomes consist of a small (40S) and a large (60S) subunit. The 40S small subunit contains 1 molecule of ribosomal RNA (18S rRNA) and 33 different proteins (encoded by 57 genes). The large 60S subunit contains 3 rRNA molecules (25S, 5.8S and 5S rRNA) and 46 different proteins (encoded by 81 genes).

The protein localises to the cytoplasm. Its function is as follows. Component of the ribosome, a large ribonucleoprotein complex responsible for the synthesis of proteins in the cell. The small ribosomal subunit (SSU) binds messenger RNAs (mRNAs) and translates the encoded message by selecting cognate aminoacyl-transfer RNA (tRNA) molecules. The large subunit (LSU) contains the ribosomal catalytic site termed the peptidyl transferase center (PTC), which catalyzes the formation of peptide bonds, thereby polymerizing the amino acids delivered by tRNAs into a polypeptide chain. The nascent polypeptides leave the ribosome through a tunnel in the LSU and interact with protein factors that function in enzymatic processing, targeting, and the membrane insertion of nascent chains at the exit of the ribosomal tunnel. The protein is Small ribosomal subunit protein eS4B of Saccharomyces cerevisiae (strain ATCC 204508 / S288c) (Baker's yeast).